Reading from the N-terminus, the 262-residue chain is Acyl-[acyl-carrier-protein]--UDP-N-acetylglucosamine O-acyltransferase (262 aa).

Belongs to the transferase hexapeptide repeat family. LpxA subfamily. Homotrimer.

It is found in the cytoplasm. It carries out the reaction a (3R)-hydroxyacyl-[ACP] + UDP-N-acetyl-alpha-D-glucosamine = a UDP-3-O-[(3R)-3-hydroxyacyl]-N-acetyl-alpha-D-glucosamine + holo-[ACP]. The protein operates within glycolipid biosynthesis; lipid IV(A) biosynthesis; lipid IV(A) from (3R)-3-hydroxytetradecanoyl-[acyl-carrier-protein] and UDP-N-acetyl-alpha-D-glucosamine: step 1/6. Its function is as follows. Involved in the biosynthesis of lipid A, a phosphorylated glycolipid that anchors the lipopolysaccharide to the outer membrane of the cell. The polypeptide is Acyl-[acyl-carrier-protein]--UDP-N-acetylglucosamine O-acyltransferase (Yersinia enterocolitica).